The primary structure comprises 934 residues: Coiled-coil domain-containing protein 39 (934 aa).

4 coiled-coil regions span residues Ile-17–Lys-133, Ser-164–Leu-512, Val-540–Arg-615, and Val-664–Ile-826. Positions Leu-866 to Lys-934 are disordered. Low complexity predominate over residues Ser-873 to Ile-892. Ser-887 and Ser-895 each carry phosphoserine. The span at Arg-912 to Asn-925 shows a compositional bias: low complexity.

This sequence belongs to the CCDC39 family.

The protein resides in the cytoplasm. The protein localises to the cytoskeleton. It localises to the cilium axoneme. Functionally, required for assembly of dynein regulatory complex (DRC) and inner dynein arm (IDA) complexes, which are responsible for ciliary beat regulation, thereby playing a central role in motility in cilia and flagella. Probably acts together with CCDC40 to form a molecular ruler that determines the 96 nanometer (nm) repeat length and arrangements of components in cilia and flagella. Not required for outer dynein arm complexes assembly. This chain is Coiled-coil domain-containing protein 39 (Ccdc39), found in Rattus norvegicus (Rat).